We begin with the raw amino-acid sequence, 2185 residues long: Genome polyprotein (2185 aa).

Residue G2 is the site of N-myristoyl glycine; by host attachment. Residues G2 to Q1495 are Cytoplasmic-facing. The amphipathic alpha-helix stretch occupies residues F566–V582. Residues H872 and D890 each act as for protease 2A activity in the active site. Positions 907 and 909 each coordinate Zn(2+). C961 acts as the For protease 2A activity in catalysis. Zn(2+) is bound by residues C967 and H969. Positions N1101–Q1173 are membrane-binding. Residues N1101–T1239 form an oligomerization region. The segment at A1122–Q1126 is RNA-binding. The 157-residue stretch at E1205 to N1361 folds into the SF3 helicase domain. Residues C1369, C1381, and C1386 each contribute to the Zn(2+) site. The C4-type; degenerate zinc-finger motif lies at C1369–C1386. Residues E1413 to V1420 are RNA-binding. Residues L1424 to Q1429 form an oligomerization region. The stretch at A1496–Y1511 is an intramembrane region. At K1512 to F2185 the chain is on the cytoplasmic side. O-(5'-phospho-RNA)-tyrosine is present on Y1521. In terms of domain architecture, Peptidase C3 spans G1541–F1719. Active-site for protease 3C activity residues include H1580, E1611, and C1687. The RdRp catalytic domain maps to G1950–L2066. Mg(2+)-binding residues include D1956 and D2052.

The protein belongs to the picornaviruses polyprotein family. In terms of assembly, interacts with capsid protein VP1 and capsid protein VP3 to form heterotrimeric protomers. Interacts with capsid protein VP0, and capsid protein VP3 to form heterotrimeric protomers. Five protomers subsequently associate to form pentamers which serve as building blocks for the capsid. Interacts with capsid protein VP2, capsid protein VP3 and capsid protein VP4 following cleavage of capsid protein VP0. As to quaternary structure, interacts with capsid protein VP1 and capsid protein VP3 in the mature capsid. In terms of assembly, interacts with capsid protein VP0 and capsid protein VP1 to form heterotrimeric protomers. Five protomers subsequently associate to form pentamers which serve as building blocks for the capsid. Interacts with capsid protein VP4 in the mature capsid. Interacts with protein 2C; this interaction may be important for virion morphogenesis. Interacts with capsid protein VP1 and capsid protein VP3. As to quaternary structure, homodimer. In terms of assembly, homohexamer; forms a hexameric ring structure with 6-fold symmetry characteristic of AAA+ ATPases. Interacts (via N-terminus) with host RTN3 (via reticulon domain); this interaction is important for viral replication. Interacts with capsid protein VP3; this interaction may be important for virion morphogenesis. Interacts with protein 3CD. As to quaternary structure, homodimer. Interacts with host GBF1. Interacts (via GOLD domain) with host ACBD3 (via GOLD domain); this interaction allows the formation of a viral protein 3A/ACBD3 heterotetramer with a 2:2 stoichiometry, which will stimulate the recruitment of host PI4KB in order to synthesize PI4P at the viral RNA replication sites. In terms of assembly, interacts with RNA-directed RNA polymerase. Interacts with protein 3AB and with RNA-directed RNA polymerase. As to quaternary structure, interacts with Viral protein genome-linked and with protein 3CD. Mg(2+) serves as cofactor. In terms of processing, specific enzymatic cleavages in vivo by the viral proteases yield processing intermediates and the mature proteins. Post-translationally, myristoylation is required for the formation of pentamers during virus assembly. Further assembly of 12 pentamers and a molecule of genomic RNA generates the provirion. During virion maturation, immature virions are rendered infectious following cleavage of VP0 into VP4 and VP2. This maturation seems to be an autocatalytic event triggered by the presence of RNA in the capsid and it is followed by a conformational change infectious virion. In terms of processing, myristoylation is required during RNA encapsidation and formation of the mature virus particle. Post-translationally, VPg is uridylylated by the polymerase into VPg-pUpU. This acts as a nucleotide-peptide primer for the genomic RNA replication.

Its subcellular location is the virion. The protein localises to the host cytoplasm. It localises to the host cytoplasmic vesicle membrane. It is found in the host nucleus. The catalysed reaction is a ribonucleoside 5'-triphosphate + H2O = a ribonucleoside 5'-diphosphate + phosphate + H(+). It catalyses the reaction Selective cleavage of Tyr-|-Gly bond in the picornavirus polyprotein.. The enzyme catalyses RNA(n) + a ribonucleoside 5'-triphosphate = RNA(n+1) + diphosphate. It carries out the reaction Selective cleavage of Gln-|-Gly bond in the poliovirus polyprotein. In other picornavirus reactions Glu may be substituted for Gln, and Ser or Thr for Gly.. Replication or transcription is subject to high level of random mutations by the nucleotide analog ribavirin. Forms an icosahedral capsid of pseudo T=3 symmetry with capsid proteins VP2 and VP3. The capsid is 300 Angstroms in diameter, composed of 60 copies of each capsid protein and enclosing the viral positive strand RNA genome. Capsid protein VP1 mainly forms the vertices of the capsid. Capsid protein VP1 interacts with host cell receptor to provide virion attachment to target host cells. This attachment induces virion internalization. Tyrosine kinases are probably involved in the entry process. After binding to its receptor, the capsid undergoes conformational changes. Capsid protein VP1 N-terminus (that contains an amphipathic alpha-helix) and capsid protein VP4 are externalized. Together, they shape a pore in the host membrane through which viral genome is translocated to host cell cytoplasm. In terms of biological role, forms an icosahedral capsid of pseudo T=3 symmetry with capsid proteins VP2 and VP3. The capsid is 300 Angstroms in diameter, composed of 60 copies of each capsid protein and enclosing the viral positive strand RNA genome. Functionally, lies on the inner surface of the capsid shell. After binding to the host receptor, the capsid undergoes conformational changes. Capsid protein VP4 is released, Capsid protein VP1 N-terminus is externalized, and together, they shape a pore in the host membrane through which the viral genome is translocated into the host cell cytoplasm. Its function is as follows. Component of immature procapsids, which is cleaved into capsid proteins VP4 and VP2 after maturation. Allows the capsid to remain inactive before the maturation step. Cysteine protease that cleaves viral polyprotein and specific host proteins. It is responsible for the autocatalytic cleavage between the P1 and P2 regions, which is the first cleavage occurring in the polyprotein. Also cleaves the host translation initiation factor EIF4G1, in order to shut down the capped cellular mRNA translation. Inhibits the host nucleus-cytoplasm protein and RNA trafficking by cleaving host members of the nuclear pores. Counteracts stress granule formation probably by antagonizing its assembly or promoting its dissassembly. Cleaves and inhibits host IFIH1/MDA5, thereby inhibiting the type-I IFN production and the establishment of the antiviral state. Cleaves and inhibits host MAVS, thereby inhibiting the type-I IFN production and the establishment of the antiviral state. In terms of biological role, plays an essential role in the virus replication cycle by acting as a viroporin. Creates a pore in the host endoplasmic reticulum and as a consequence releases Ca2+ in the cytoplasm of infected cell. In turn, high levels of cytoplasmic calcium may trigger membrane trafficking and transport of viral ER-associated proteins to viroplasms, sites of viral genome replication. Functionally, induces and associates with structural rearrangements of intracellular membranes. Displays RNA-binding, nucleotide binding and NTPase activities. May play a role in virion morphogenesis and viral RNA encapsidation by interacting with the capsid protein VP3. Its function is as follows. Localizes the viral replication complex to the surface of membranous vesicles. Together with protein 3CD binds the Cis-Active RNA Element (CRE) which is involved in RNA synthesis initiation. Acts as a cofactor to stimulate the activity of 3D polymerase, maybe through a nucleid acid chaperone activity. Localizes the viral replication complex to the surface of membranous vesicles. It inhibits host cell endoplasmic reticulum-to-Golgi apparatus transport and causes the disassembly of the Golgi complex, possibly through GBF1 interaction. This would result in depletion of MHC, trail receptors and IFN receptors at the host cell surface. Plays an essential role in viral RNA replication by recruiting ACBD3 and PI4KB at the viral replication sites, thereby allowing the formation of the rearranged membranous structures where viral replication takes place. In terms of biological role, acts as a primer for viral RNA replication and remains covalently bound to viral genomic RNA. VPg is uridylylated prior to priming replication into VPg-pUpU. The oriI viral genomic sequence may act as a template for this. The VPg-pUpU is then used as primer on the genomic RNA poly(A) by the RNA-dependent RNA polymerase to replicate the viral genome. During genome replication, the VPg-RNA linkage is removed by the host TDP2, thereby accelerating replication. During the late stage of the replication cycle, host TDP2 is excluded from sites of viral RNA synthesis and encapsidation, allowing for the generation of progeny virions. Functionally, involved in the viral replication complex and viral polypeptide maturation. It exhibits protease activity with a specificity and catalytic efficiency that is different from protease 3C. Protein 3CD lacks polymerase activity. Protein 3CD binds to the 5'UTR of the viral genome. Its function is as follows. Replicates the viral genomic RNA on the surface of intracellular membranes. May form linear arrays of subunits that propagate along a strong head-to-tail interaction called interface-I. Covalently attaches UMP to a tyrosine of VPg, which is used to prime RNA synthesis. The positive stranded RNA genome is first replicated at virus induced membranous vesicles, creating a dsRNA genomic replication form. This dsRNA is then used as template to synthesize positive stranded RNA genomes. ss(+)RNA genomes are either translated, replicated or encapsidated. Major viral protease that mediates proteolytic processing of the polyprotein. Cleaves host EIF5B, contributing to host translation shutoff. Also cleaves host PABPC1, contributing to host translation shutoff. Cleaves host NLRP1, triggers host N-glycine-mediated degradation of the autoinhibitory NLRP1 N-terminal fragment. This Homo sapiens (Human) protein is Genome polyprotein.